The primary structure comprises 149 residues: Decarboxylase AgnL1 (149 aa).

Residues 30–125 (PGMSEEDYRH…VGDHEKFADT (96 aa)) enclose the EthD domain.

This sequence belongs to the tpcK family.

It carries out the reaction atrochrysone carboxylate + H(+) = atrochrysone + CO2. It functions in the pathway secondary metabolite biosynthesis. In terms of biological role, decarboxylase; part of the gene cluster that mediates the biosynthesis of agnestins, dihydroxy-xanthone metabolites. The pathway begins with the assembly and cyclization of atrochrysone thioester by the non-reducing polyketide synthase Agnpks1. The atrochrysone carboxyl ACP thioesterase AgnL7 then breaks the thioester bond and releases the atrochrysone carboxylic acid as the first enzyme-free intermediate. The decarboxylase AgnL1 then catalyzes the concerted decarboxylation-elimination required to convert atochrysone carboxylic acid into emodin anthrone, which is further oxidized to emodin by the anthrone oxygenase AgnL2. Emodin then undergoes reduction catalyzed by the oxidoreductase AgnL4 to yield the dihydroquinone tautomer which is the substrate for reduction by the short chain dehydrogenase AgnL6 reduction to produce hydroxyketone, followed by AgnL8 dehydration and likely spontaneous autoxidation to chrysophanol. Baeyer-Villiger oxidation by the oxidase AgnL3 leads to monodictyphenone via cleavage of the C-10/C-10a bond of chrysophanol. Alternative cleavage at the C-4a/C-10 bond of chrysophanol also leads to the formation some cephalone F. Further conversion to agnestins A and B, requires reduction to dihydro-monodictyphenone, oxidation to agnestin C probably via an epoxide, and rearrangement to either agnestin A or agnestin B directly, although agnestin A or agnestin B can also interconvert. Within the cluster, AgnR1 is the only unassigned oxidoreductase present which could be involved in this conversion. However, AgnR1 seems not to be involved in this step, and thus genes involved in the proposed oxidation/reduction may be located elsewhere on the genome. Further agnestin A derivatives are probably formed by spontaneous decarboxylations, dehydrations and methanolysis reactions. In Paecilomyces divaricatus (Penicillium divaricatum), this protein is Decarboxylase AgnL1.